The primary structure comprises 647 residues: Threonine--tRNA ligase (647 aa).

The TGS domain maps to 1-63 (MADISIKFPD…ASDGSIEIVT (63 aa)). Residues 242-540 (DHRVIGNQLD…LTEIYKGAFP (299 aa)) form a catalytic region. Cysteine 336, histidine 387, and histidine 517 together coordinate Zn(2+).

This sequence belongs to the class-II aminoacyl-tRNA synthetase family. In terms of assembly, homodimer. Requires Zn(2+) as cofactor.

It is found in the cytoplasm. The enzyme catalyses tRNA(Thr) + L-threonine + ATP = L-threonyl-tRNA(Thr) + AMP + diphosphate + H(+). Catalyzes the attachment of threonine to tRNA(Thr) in a two-step reaction: L-threonine is first activated by ATP to form Thr-AMP and then transferred to the acceptor end of tRNA(Thr). Also edits incorrectly charged L-seryl-tRNA(Thr). This chain is Threonine--tRNA ligase, found in Levilactobacillus brevis (strain ATCC 367 / BCRC 12310 / CIP 105137 / JCM 1170 / LMG 11437 / NCIMB 947 / NCTC 947) (Lactobacillus brevis).